A 322-amino-acid polypeptide reads, in one-letter code: Retinal homeobox protein Rx-A (322 aa).

The Octapeptide motif motif lies at His-32–Gly-39. A compositionally biased stretch (basic and acidic residues) spans Thr-75–Asp-87. The segment at Thr-75–Thr-136 is disordered. Residues Lys-100 to Asn-117 show a composition bias toward polar residues. A DNA-binding region (homeobox) is located at residues His-130–Glu-189. The OAR signature appears at Asn-302 to Ile-315. A Nuclear localization signal motif is present at residues Arg-308 to Lys-312.

It belongs to the paired homeobox family. Bicoid subfamily. Highly expressed in anterior neural plate followed by neural retina, pigmented epithelium, in pineal gland, diencephalon floor and epiphysis. At later stages, the neuroretina remains the primary site of expression. No expression in the developing lens and cornea.

It is found in the nucleus. In terms of biological role, plays a critical role in eye formation by regulating the initial specification of retinal cells and/or their subsequent proliferation. The chain is Retinal homeobox protein Rx-A (rax-a) from Xenopus laevis (African clawed frog).